The primary structure comprises 429 residues: Adenylosuccinate synthetase (429 aa).

Residues 12–18 (GDEGKGK) and 40–42 (GHT) contribute to the GTP site. Asp13 functions as the Proton acceptor in the catalytic mechanism. Positions 13 and 40 each coordinate Mg(2+). Residues 13 to 16 (DEGK), 38 to 41 (NAGH), Thr128, Arg142, Gln223, Thr238, and Arg302 each bind IMP. His41 acts as the Proton donor in catalysis. Residue 298–304 (ATTGRKR) participates in substrate binding. Residues Arg304, 330-332 (KLD), and 412-414 (GTG) each bind GTP.

Belongs to the adenylosuccinate synthetase family. As to quaternary structure, homodimer. It depends on Mg(2+) as a cofactor.

It is found in the cytoplasm. It catalyses the reaction IMP + L-aspartate + GTP = N(6)-(1,2-dicarboxyethyl)-AMP + GDP + phosphate + 2 H(+). It participates in purine metabolism; AMP biosynthesis via de novo pathway; AMP from IMP: step 1/2. Functionally, plays an important role in the de novo pathway of purine nucleotide biosynthesis. Catalyzes the first committed step in the biosynthesis of AMP from IMP. This chain is Adenylosuccinate synthetase, found in Tropheryma whipplei (strain TW08/27) (Whipple's bacillus).